We begin with the raw amino-acid sequence, 156 residues long: Small ribosomal subunit protein uS7 (156 aa).

The protein belongs to the universal ribosomal protein uS7 family. Part of the 30S ribosomal subunit. Contacts proteins S9 and S11.

Functionally, one of the primary rRNA binding proteins, it binds directly to 16S rRNA where it nucleates assembly of the head domain of the 30S subunit. Is located at the subunit interface close to the decoding center, probably blocks exit of the E-site tRNA. This chain is Small ribosomal subunit protein uS7, found in Chromobacterium violaceum (strain ATCC 12472 / DSM 30191 / JCM 1249 / CCUG 213 / NBRC 12614 / NCIMB 9131 / NCTC 9757 / MK).